The chain runs to 260 residues: Ribosome maturation factor RimP (260 aa).

Basic and acidic residues-rich tracts occupy residues 189–199 and 215–227; these read RRGRDAEREQL and AREM…PRKE. Residues 189 to 260 form a disordered region; that stretch reads RRGRDAEREQ…QTTSDPHQGE (72 aa). The segment covering 228-242 has biased composition (basic residues); the sequence is KTAKKPLPKNTKAHR.

The protein belongs to the RimP family.

Its subcellular location is the cytoplasm. In terms of biological role, required for maturation of 30S ribosomal subunits. The sequence is that of Ribosome maturation factor RimP from Afipia carboxidovorans (strain ATCC 49405 / DSM 1227 / KCTC 32145 / OM5) (Oligotropha carboxidovorans).